A 158-amino-acid polypeptide reads, in one-letter code: Endoribonuclease YbeY (158 aa).

Positions 124, 128, and 134 each coordinate Zn(2+).

Belongs to the endoribonuclease YbeY family. Requires Zn(2+) as cofactor.

Its subcellular location is the cytoplasm. Its function is as follows. Single strand-specific metallo-endoribonuclease involved in late-stage 70S ribosome quality control and in maturation of the 3' terminus of the 16S rRNA. The protein is Endoribonuclease YbeY of Caldicellulosiruptor saccharolyticus (strain ATCC 43494 / DSM 8903 / Tp8T 6331).